We begin with the raw amino-acid sequence, 262 residues long: Intron-encoded DNA endonuclease ai2b (262 aa).

It belongs to the LAGLIDADG endonuclease family.

It localises to the mitochondrion. Mitochondrial DNA endonuclease involved in intron homing. The sequence is that of Intron-encoded DNA endonuclease ai2b (ai2b) from Dictyostelium discoideum (Social amoeba).